Consider the following 291-residue polypeptide: MFKGSMPALVTPFRNGELDLETLKKLVEWHIGEGSNGLVPVGTTGESPTLTHKEHEVVVEEVVKAAAGRVPVIAGAGSNNTLEAIRLVRHAEAVGADAALVVTPYYNKPTQSGLIAHFTALHDCADLPIIIYNIPGRSVVDMSPETMGKLAELPRIIGVKDATGDLARVCDQRSTCGPDFMQLSGEDATAHGFNAQGGVGCISVTANVAPKLLSQMQAACLAGDYATALSIQDRLMPLHKAIFIEPGLVGVKYAMSQLDLCSEEVRLPLTALSDETRALVDAGLRHAGLMN.

Thr44 is a binding site for pyruvate. The active-site Proton donor/acceptor is the Tyr132. Lys160 serves as the catalytic Schiff-base intermediate with substrate. Pyruvate is bound at residue Ile202.

Belongs to the DapA family. As to quaternary structure, homotetramer; dimer of dimers.

It localises to the cytoplasm. The enzyme catalyses L-aspartate 4-semialdehyde + pyruvate = (2S,4S)-4-hydroxy-2,3,4,5-tetrahydrodipicolinate + H2O + H(+). It participates in amino-acid biosynthesis; L-lysine biosynthesis via DAP pathway; (S)-tetrahydrodipicolinate from L-aspartate: step 3/4. Catalyzes the condensation of (S)-aspartate-beta-semialdehyde [(S)-ASA] and pyruvate to 4-hydroxy-tetrahydrodipicolinate (HTPA). This Roseobacter denitrificans (strain ATCC 33942 / OCh 114) (Erythrobacter sp. (strain OCh 114)) protein is 4-hydroxy-tetrahydrodipicolinate synthase.